A 432-amino-acid polypeptide reads, in one-letter code: Probable pectate lyase 22 (432 aa).

The signal sequence occupies residues 1-45 (MFRPNSLLIPSNLSTTKSQRNTMLNSSYLSFALIFFCCILFSALA). Asn-65 carries an N-linked (GlcNAc...) asparagine glycan. The Ca(2+) site is built by Asp-228, Asp-252, and Asp-256. Residue Arg-308 is part of the active site.

Belongs to the polysaccharide lyase 1 family. Ca(2+) is required as a cofactor.

The catalysed reaction is Eliminative cleavage of (1-&gt;4)-alpha-D-galacturonan to give oligosaccharides with 4-deoxy-alpha-D-galact-4-enuronosyl groups at their non-reducing ends.. The protein operates within glycan metabolism; pectin degradation; 2-dehydro-3-deoxy-D-gluconate from pectin: step 2/5. The sequence is that of Probable pectate lyase 22 from Arabidopsis thaliana (Mouse-ear cress).